The sequence spans 876 residues: MKYMTADEIRQSFLKYFESKGHTIVKSASIIPENDPTLLFVNAGMVPFKNVFLGLEERPYKRAASCQKVFRVSGKHNDLENVGYTPRHHTFFEMLGNFSFGDYFKKEAIEFAWEYLTEHLEIPKEKLLVSVFEEDDEAFEIWNKHIGLDESKIKRMGYKDNFWSMGDTGPCGPSSEIYYDRGEKFGNPEFGAEDDFRYLEIWNLVFMQYNRDEKGVLHPLPNPSIDTGMGLERIASVLQGVDSNYDTDLFKPIIQFAEEVSGKEYGKNEKDDIAMRVIADHLRAITFLISDGVLPANEGRGYVLRRIIRRALRYGKNLGIEKPFLYEGVDVVIEKMKTAYPELIQNRSFIKTITKSEEEKFIKTLKRSMDILYQMIEQARKENRRHLTGEETFKLYDTYGFPIDLMEEILKDEGFTFDLIEFHNLLEEQKERARKSWKSQSKEIKPVYLTLKNKLPENQFVGYETLTSENSKVLAIIKGDQLVDTAKEGEDIEIVLDITPFYPEKGGQIGDRGIIEGDEFLFEVLDTQTPVDGLIVHKGKVLFGSVKEGAYVRAKTDKERRENIMRHHTATHLLHAALRNVLGDHVKQAGSLVSDEYLRFDFTHFESMTDEELKAVEELVNREIMKNEEVVCQEMQYEEALKSGAMAIFEEKYADVVRVISAGISKELCGGTHVKRTGDIGYFKILSESAVSSGTRRIEAVAGIKAVEKGLQEHYIIKDLSRLLTAKEDQLLDRVLKLQNQIKEKEREIENLRKKLALSNINENLNIIEKEGFKVAYVSVENLNPNELREIADHLRQKLGKSVILVASKDAEKQKVNFVVAVSKELSENYKAGDIVKKVASAANGSGGGRPDFAQGGINDTSKLSQLFEEFKKIFS.

H568, H572, C669, and H673 together coordinate Zn(2+).

This sequence belongs to the class-II aminoacyl-tRNA synthetase family. The cofactor is Zn(2+).

Its subcellular location is the cytoplasm. The catalysed reaction is tRNA(Ala) + L-alanine + ATP = L-alanyl-tRNA(Ala) + AMP + diphosphate. Its function is as follows. Catalyzes the attachment of alanine to tRNA(Ala) in a two-step reaction: alanine is first activated by ATP to form Ala-AMP and then transferred to the acceptor end of tRNA(Ala). Also edits incorrectly charged Ser-tRNA(Ala) and Gly-tRNA(Ala) via its editing domain. The sequence is that of Alanine--tRNA ligase from Sulfurihydrogenibium sp. (strain YO3AOP1).